A 702-amino-acid chain; its full sequence is Amino-acid racemase (702 aa).

The Cytoplasmic segment spans residues 1-12 (MKHRANGIDLFR). A helical membrane pass occupies residues 13–33 (IFAATMVVAIHTFPFQSIAPF). Residues 34–39 (LDEVIT) lie on the Extracellular side of the membrane. Residues 40–60 (LTVFRVAVPFFFMITGYFLLG) traverse the membrane as a helical segment. Topologically, residues 61-77 (RLSLNFSYNNNQRVKKY) are cytoplasmic. The helical transmembrane segment at 78 to 98 (LYKIGMIYLYSILLYFPLSLL) threads the bilayer. Residues 99 to 120 (NGTISLKMNILLLLKVFIFDGT) lie on the Extracellular side of the membrane. The chain crosses the membrane as a helical span at residues 121–141 (FYHLWYFPASIIGTILVTLLL). Position 142 (Arg142) is a topological domain, cytoplasmic. A helical membrane pass occupies residues 143-163 (SIGFKLTVAFSTCLYLVGLGG). Residues 164–191 (DSWYGITNQVPLLNKLYTFIFSWSDYTR) are Extracellular-facing. The chain crosses the membrane as a helical span at residues 192–212 (SGVFFTPVFLCLGIFAYRVSK). Residues 213–218 (KLTASK) are Cytoplasmic-facing. A helical membrane pass occupies residues 219–239 (ILNLLFYVFIIGMTFESIFLH). Topologically, residues 240 to 248 (RFTNVKHDS) are extracellular. The helical transmembrane segment at 249–269 (MYLLLPSCALILFLMLLNWQP) threads the bilayer. The Cytoplasmic portion of the chain corresponds to 270 to 276 (KLKVKES). The chain crosses the membrane as a helical span at residues 277-297 (ADLTLLVYILHPLVIVIVHSI). Residues 298–307 (SKYIPILKNS) lie on the Extracellular side of the membrane. A helical transmembrane segment spans residues 308–328 (LLNFLLVVVCSFILAQLLLNL). Residues 329–702 (KRKLRVSKQK…LGSRLGTELN (374 aa)) lie on the Cytoplasmic side of the membrane. Positions 337–702 (QKIPFERASK…LGSRLGTELN (366 aa)) are racemase. Lys375 functions as the Proton acceptor in the catalytic mechanism. Residue Lys375 is modified to N6-(pyridoxal phosphate)lysine. Substrate is bound at residue Arg469. The active-site Proton acceptor is the Tyr601. Residue Met650 coordinates substrate.

This sequence in the N-terminal section; belongs to the acyltransferase 3 family. In the C-terminal section; belongs to the alanine racemase family. It depends on pyridoxal 5'-phosphate as a cofactor.

It is found in the cell membrane. The protein is Amino-acid racemase (vanTE) of Enterococcus faecalis (Streptococcus faecalis).